We begin with the raw amino-acid sequence, 406 residues long: Phosphopentomutase (406 aa).

Aspartate 10, aspartate 305, histidine 310, aspartate 346, histidine 347, and histidine 358 together coordinate Mn(2+).

This sequence belongs to the phosphopentomutase family. It depends on Mn(2+) as a cofactor.

It localises to the cytoplasm. It catalyses the reaction 2-deoxy-alpha-D-ribose 1-phosphate = 2-deoxy-D-ribose 5-phosphate. It carries out the reaction alpha-D-ribose 1-phosphate = D-ribose 5-phosphate. Its pathway is carbohydrate degradation; 2-deoxy-D-ribose 1-phosphate degradation; D-glyceraldehyde 3-phosphate and acetaldehyde from 2-deoxy-alpha-D-ribose 1-phosphate: step 1/2. Its function is as follows. Isomerase that catalyzes the conversion of deoxy-ribose 1-phosphate (dRib-1-P) and ribose 1-phosphate (Rib-1-P) to deoxy-ribose 5-phosphate (dRib-5-P) and ribose 5-phosphate (Rib-5-P), respectively. The chain is Phosphopentomutase from Vibrio parahaemolyticus serotype O3:K6 (strain RIMD 2210633).